The primary structure comprises 897 residues: Translation initiation factor IF-2 (897 aa).

The tract at residues 52-310 (EHGSAPDKLT…LLQQGFQKPA (259 aa)) is disordered. Over residues 68 to 82 (STLNVPGTGGKSKSV) the composition is skewed to polar residues. 2 stretches are compositionally biased toward basic and acidic residues: residues 85 to 159 (EVRK…KDKV) and 166 to 217 (EMTK…ENEK). Over residues 256–272 (GRTRTASKTARPQKKGN) the composition is skewed to basic residues. A compositionally biased stretch (basic and acidic residues) spans 273 to 286 (KHAESKADREEARA). Positions 396 to 565 (PRAPVVTIMG…LLQAEVLELK (170 aa)) constitute a tr-type G domain. The interval 405–412 (GHVDHGKT) is G1. 405–412 (GHVDHGKT) provides a ligand contact to GTP. Positions 430 to 434 (GITQH) are G2. Positions 451–454 (DTPG) are G3. GTP contacts are provided by residues 451-455 (DTPGH) and 505-508 (NKID). The interval 505–508 (NKID) is G4. Residues 541–543 (SAK) are G5.

Belongs to the TRAFAC class translation factor GTPase superfamily. Classic translation factor GTPase family. IF-2 subfamily.

The protein resides in the cytoplasm. Functionally, one of the essential components for the initiation of protein synthesis. Protects formylmethionyl-tRNA from spontaneous hydrolysis and promotes its binding to the 30S ribosomal subunits. Also involved in the hydrolysis of GTP during the formation of the 70S ribosomal complex. The sequence is that of Translation initiation factor IF-2 (infB) from Enterobacter cloacae.